Reading from the N-terminus, the 946-residue chain is Protein dct-6 (946 aa).

Residues 326 to 363 (YMDMNDQIEQMIALLVDQLEELEKLEQLCDEVQKTGNQ) adopt a coiled-coil conformation.

In terms of biological role, may have a role in tumor suppression. In Caenorhabditis briggsae, this protein is Protein dct-6.